Here is a 149-residue protein sequence, read N- to C-terminus: uncharacterized protein (149 aa).

Residues 111–140 adopt a coiled-coil conformation; the sequence is HKALEKATELIENEEELLKREGIKRENLKF.

This is an uncharacterized protein from Aquifex aeolicus (strain VF5).